Consider the following 415-residue polypeptide: Putative serpin-Z6C (415 aa).

The RCL stretch occupies residues 357 to 381 (GTEAAAATAVCLTFASAAPSSRRPA).

It belongs to the serpin family.

Functionally, probable serine protease inhibitor. In Oryza sativa subsp. japonica (Rice), this protein is Putative serpin-Z6C.